Reading from the N-terminus, the 435-residue chain is NADH-quinone oxidoreductase subunit D (435 aa).

It belongs to the complex I 49 kDa subunit family. As to quaternary structure, NDH-1 is composed of 14 different subunits. Subunits NuoB, C, D, E, F, and G constitute the peripheral sector of the complex.

It localises to the cell inner membrane. The catalysed reaction is a quinone + NADH + 5 H(+)(in) = a quinol + NAD(+) + 4 H(+)(out). NDH-1 shuttles electrons from NADH, via FMN and iron-sulfur (Fe-S) centers, to quinones in the respiratory chain. The immediate electron acceptor for the enzyme in this species is believed to be ubiquinone. Couples the redox reaction to proton translocation (for every two electrons transferred, four hydrogen ions are translocated across the cytoplasmic membrane), and thus conserves the redox energy in a proton gradient. This chain is NADH-quinone oxidoreductase subunit D, found in Xylella fastidiosa (strain M12).